A 202-amino-acid polypeptide reads, in one-letter code: Glycerol-3-phosphate acyltransferase (202 aa).

The next 6 membrane-spanning stretches (helical) occupy residues 3–23, 61–81, 87–107, 118–138, 144–164, and 167–187; these read NLIIYAFIYLLGSIPFGLILA, IATIILDFAKAAIPLLILKFL, LLWSVAVLAIFGHCFSIYLLF, GAMIVLLPLEVLTAFIVWVVI, ISSLASLAALLAFVISSFIFN, and LEIHTHAPVFIIAFIIIYKHL.

Belongs to the PlsY family. Probably interacts with PlsX.

It localises to the cell inner membrane. The catalysed reaction is an acyl phosphate + sn-glycerol 3-phosphate = a 1-acyl-sn-glycero-3-phosphate + phosphate. The protein operates within lipid metabolism; phospholipid metabolism. In terms of biological role, catalyzes the transfer of an acyl group from acyl-phosphate (acyl-PO(4)) to glycerol-3-phosphate (G3P) to form lysophosphatidic acid (LPA). This enzyme utilizes acyl-phosphate as fatty acyl donor, but not acyl-CoA or acyl-ACP. The chain is Glycerol-3-phosphate acyltransferase from Campylobacter jejuni subsp. jejuni serotype O:23/36 (strain 81-176).